A 483-amino-acid polypeptide reads, in one-letter code: Regulatory protein ViaA (483 aa).

Belongs to the ViaA family. Homodimer. Interacts with RavA.

The protein resides in the cytoplasm. Component of the RavA-ViaA chaperone complex, which may act on the membrane to optimize the function of some of the respiratory chains. ViaA stimulates the ATPase activity of RavA. In Enterobacter sp. (strain 638), this protein is Regulatory protein ViaA.